A 139-amino-acid polypeptide reads, in one-letter code: uncharacterized protein (139 aa).

The protein to M.tuberculosis Rv2798c.

This is an uncharacterized protein from Mycobacterium tuberculosis (strain CDC 1551 / Oshkosh).